The primary structure comprises 287 residues: MMKNILAIQSHVVYGHAGNSAAEFPMRRLGANVWPLNTVQFSNHTQYGKWTGCVMPPSHLTEIVQGIAAIDKLHTCDAVLSGYLGSAEQGEHILGIVRQVKAANPQAKYFCDPVMGHPEKGCIVAPGVAEFHVRHGLPASDIIAPNLVELEILCEHAVNNVEEAVLAARELIAQGPQIVLVKHLARAGYSRDRFEMLLVTADEAWHISRPLVDFGMRQPVGVGDVTSGLLLVKLLQGATLQEVLEHVTAAVYEIMVTTKAMQEYELQVVAAQDRIAKPEHYFSATKL.

Residues Ser-10 and Thr-45–Gln-46 contribute to the substrate site. Residues Asp-112, Ala-144, Glu-149, Lys-182, and Arg-209–Val-212 each bind ATP. Asp-224 serves as a coordination point for substrate.

This sequence belongs to the pyridoxine kinase family. PdxY subfamily. As to quaternary structure, homodimer. It depends on Mg(2+) as a cofactor.

It carries out the reaction pyridoxal + ATP = pyridoxal 5'-phosphate + ADP + H(+). It participates in cofactor metabolism; pyridoxal 5'-phosphate salvage; pyridoxal 5'-phosphate from pyridoxal: step 1/1. Pyridoxal kinase involved in the salvage pathway of pyridoxal 5'-phosphate (PLP). Catalyzes the phosphorylation of pyridoxal to PLP. The protein is Pyridoxal kinase PdxY of Shigella sonnei (strain Ss046).